A 243-amino-acid chain; its full sequence is Pleckstrin homology domain-containing family B member 1 (243 aa).

The 108-residue stretch at alanine 21–serine 128 folds into the PH domain.

In terms of assembly, binds transducins. Homodimer. Interacts (via PH domain) with MYO1C. Interacts (via PH domain) with MYO7A. As to expression, highly expressed in retina and brain. In retina, abundantly expressed in photoreceptors. Isoform 4 is the predominant isoform expressed in mature olfactory receptor neurons and vestibular and cochlear hair cells. Also expressed in cells with possible sensory function, including peripheral retinal ganglion cells, cochlear interdental cells, and neurons of the circumventricular organ (at protein level).

It localises to the membrane. It is found in the cytoplasm. The chain is Pleckstrin homology domain-containing family B member 1 (Plekhb1) from Mus musculus (Mouse).